Consider the following 436-residue polypeptide: IIDVHEIDQIMTCSVWLKQVWIDKKLSWNPEIYGGVSVLYVPYEMVWVPDIVLYNTVDSNYNITISTKATLRYDGQVTWDSPAIFKTLCQIDVRWFPFDEQNCHFKFGSWTYTEDLLNLELLDSDARYELEMNENGELNNITIFEEGIDLSDYYPSVEWDIMSRIAKRRTKNYLTSFSDEAFIDIIFYLELRRKPLFYTVNLVFPCVGISFLTIVAFYLPPRSGEKVTLCILILVALTVFYLLLKDIIPATSIALPLFGKYLLFTMIMVSLSVLVTVISLNLHFRRPSTHRMPIWVKWLFLRILPKILFMRRPTLIKVDEAVRRVADYRRGYNMIINRYEQKVNCDSCRNVNKRITQEIQKIYRSPHVIKAFENVCFIAQLLKKKDREAMIDEDWKFVARVLDRLFLLLFSIACFLGTILILFQAPSLYDTRQAIN.

Topologically, residues 1-195 are extracellular; that stretch reads IIDVHEIDQI…IFYLELRRKP (195 aa). An N-linked (GlcNAc...) asparagine glycan is attached at Asn-62. Cys-89 and Cys-103 form a disulfide bridge. Residue Asn-140 is glycosylated (N-linked (GlcNAc...) asparagine). 3 helical membrane passes run 196 to 219, 227 to 245, and 261 to 280; these read LFYT…AFYL, VTLC…LLLK, and YLLF…VISL. Topologically, residues 281–404 are cytoplasmic; it reads NLHFRRPSTH…WKFVARVLDR (124 aa). A helical membrane pass occupies residues 405-423; it reads LFLLLFSIACFLGTILILF.

It belongs to the ligand-gated ion channel (TC 1.A.9) family. Acetylcholine receptor (TC 1.A.9.1) subfamily.

The protein localises to the postsynaptic cell membrane. The protein resides in the cell membrane. After binding acetylcholine, the AChR responds by an extensive change in conformation that affects all subunits and leads to opening of an ion-conducting channel across the plasma membrane. This is Acetylcholine receptor non-alpha chain from Onchocerca volvulus.